Consider the following 200-residue polypeptide: GMP synthase [glutamine-hydrolyzing] subunit A (200 aa).

The Glutamine amidotransferase type-1 domain occupies 3-193 (KIYVVDNGGQ…IGICASYREI (191 aa)). Cys80 functions as the Nucleophile in the catalytic mechanism. Catalysis depends on residues His167 and Glu169.

As to quaternary structure, heterodimer composed of a glutamine amidotransferase subunit (A) and a GMP-binding subunit (B).

The enzyme catalyses XMP + L-glutamine + ATP + H2O = GMP + L-glutamate + AMP + diphosphate + 2 H(+). Its pathway is purine metabolism; GMP biosynthesis; GMP from XMP (L-Gln route): step 1/1. Its function is as follows. Catalyzes the synthesis of GMP from XMP. The polypeptide is GMP synthase [glutamine-hydrolyzing] subunit A (Thermoplasma acidophilum (strain ATCC 25905 / DSM 1728 / JCM 9062 / NBRC 15155 / AMRC-C165)).